A 390-amino-acid chain; its full sequence is GTPase Obg (390 aa).

The 159-residue stretch at 1-159 (MKFVDEATIK…RELRLELLLL (159 aa)) folds into the Obg domain. One can recognise an OBG-type G domain in the interval 160-333 (ADVGMLGLPN…LCDELADFMD (174 aa)). GTP contacts are provided by residues 166-173 (GLPNAGKS), 191-195 (FTTLI), 213-216 (DIPG), 283-286 (NKTD), and 314-316 (AAV). Mg(2+) is bound by residues S173 and T193.

It belongs to the TRAFAC class OBG-HflX-like GTPase superfamily. OBG GTPase family. In terms of assembly, monomer. It depends on Mg(2+) as a cofactor.

The protein resides in the cytoplasm. In terms of biological role, an essential GTPase which binds GTP, GDP and possibly (p)ppGpp with moderate affinity, with high nucleotide exchange rates and a fairly low GTP hydrolysis rate. Plays a role in control of the cell cycle, stress response, ribosome biogenesis and in those bacteria that undergo differentiation, in morphogenesis control. The chain is GTPase Obg from Aliivibrio fischeri (strain ATCC 700601 / ES114) (Vibrio fischeri).